The chain runs to 99 residues: Aspartyl/glutamyl-tRNA(Asn/Gln) amidotransferase subunit C (99 aa).

It belongs to the GatC family. Heterotrimer of A, B and C subunits.

The enzyme catalyses L-glutamyl-tRNA(Gln) + L-glutamine + ATP + H2O = L-glutaminyl-tRNA(Gln) + L-glutamate + ADP + phosphate + H(+). It carries out the reaction L-aspartyl-tRNA(Asn) + L-glutamine + ATP + H2O = L-asparaginyl-tRNA(Asn) + L-glutamate + ADP + phosphate + 2 H(+). Functionally, allows the formation of correctly charged Asn-tRNA(Asn) or Gln-tRNA(Gln) through the transamidation of misacylated Asp-tRNA(Asn) or Glu-tRNA(Gln) in organisms which lack either or both of asparaginyl-tRNA or glutaminyl-tRNA synthetases. The reaction takes place in the presence of glutamine and ATP through an activated phospho-Asp-tRNA(Asn) or phospho-Glu-tRNA(Gln). The sequence is that of Aspartyl/glutamyl-tRNA(Asn/Gln) amidotransferase subunit C from Ralstonia pickettii (strain 12J).